We begin with the raw amino-acid sequence, 274 residues long: Diaminopimelate epimerase (274 aa).

Substrate contacts are provided by N11, Q44, and N64. The active-site Proton donor is the C73. Residues 74-75 (GN), N157, N190, and 208-209 (ER) contribute to the substrate site. The active-site Proton acceptor is the C217. 218 to 219 (GS) contributes to the substrate binding site.

The protein belongs to the diaminopimelate epimerase family. Homodimer.

The protein localises to the cytoplasm. It carries out the reaction (2S,6S)-2,6-diaminopimelate = meso-2,6-diaminopimelate. It functions in the pathway amino-acid biosynthesis; L-lysine biosynthesis via DAP pathway; DL-2,6-diaminopimelate from LL-2,6-diaminopimelate: step 1/1. Catalyzes the stereoinversion of LL-2,6-diaminopimelate (L,L-DAP) to meso-diaminopimelate (meso-DAP), a precursor of L-lysine and an essential component of the bacterial peptidoglycan. This is Diaminopimelate epimerase from Pectobacterium carotovorum subsp. carotovorum (strain PC1).